The chain runs to 473 residues: Photosystem II CP43 reaction center protein (473 aa).

A propeptide spanning residues 1–14 (MKTLYSLRRFYPVE) is cleaved from the precursor. At threonine 15 the chain carries N-acetylthreonine. Residue threonine 15 is modified to Phosphothreonine. Helical transmembrane passes span 69 to 93 (LFEV…PHLA), 134 to 155 (LLGP…KDRN), 178 to 200 (KALY…RKIT), 255 to 275 (KPFA…LSYS), and 291 to 312 (WFNN…ASQA). Glutamate 367 is a binding site for [CaMn4O5] cluster. Residues 447–471 (RARAAAAGFEKGIDRDFEPVLSMTP) traverse the membrane as a helical segment.

The protein belongs to the PsbB/PsbC family. PsbC subfamily. In terms of assembly, PSII is composed of 1 copy each of membrane proteins PsbA, PsbB, PsbC, PsbD, PsbE, PsbF, PsbH, PsbI, PsbJ, PsbK, PsbL, PsbM, PsbT, PsbX, PsbY, PsbZ, Psb30/Ycf12, at least 3 peripheral proteins of the oxygen-evolving complex and a large number of cofactors. It forms dimeric complexes. Binds multiple chlorophylls and provides some of the ligands for the Ca-4Mn-5O cluster of the oxygen-evolving complex. It may also provide a ligand for a Cl- that is required for oxygen evolution. PSII binds additional chlorophylls, carotenoids and specific lipids. is required as a cofactor.

It localises to the plastid. The protein resides in the chloroplast thylakoid membrane. In terms of biological role, one of the components of the core complex of photosystem II (PSII). It binds chlorophyll and helps catalyze the primary light-induced photochemical processes of PSII. PSII is a light-driven water:plastoquinone oxidoreductase, using light energy to abstract electrons from H(2)O, generating O(2) and a proton gradient subsequently used for ATP formation. In Buxus microphylla (Littleleaf boxwood), this protein is Photosystem II CP43 reaction center protein.